We begin with the raw amino-acid sequence, 216 residues long: NKG2-D type II integral membrane protein (216 aa).

The Cytoplasmic portion of the chain corresponds to 1 to 51 (MGWIRGRRSRHSWEMSEFHNYNLDLAKNDFSTRWQKQRCPVIKSKCRENTS). A helical; Signal-anchor for type II membrane protein transmembrane segment spans residues 52–72 (PLFFCCFIAVAMGIRFIVMVT). Topologically, residues 73–216 (IWSAVFLNSL…NTYICMQRTV (144 aa)) are extracellular. 2 disulfides stabilise this stretch: Cys96–Cys105 and Cys99–Cys110. In terms of domain architecture, C-type lectin spans 98–213 (PCPKNWICYK…STPNTYICMQ (116 aa)). N-linked (GlcNAc...) asparagine glycans are attached at residues Asn115, Asn131, Asn163, and Asn202. Intrachain disulfides connect Cys127–Cys211 and Cys189–Cys203.

As to quaternary structure, homodimer; disulfide-linked. Heterohexamer composed of two subunits of KLRK1 and four subunits of HCST/DAP10. Interacts (via transmembrane domain) with HCST/DAP10 (via transmembrane domain); the interaction is required for KLRK1 NK cell surface and induces NK cell-mediated cytotoxicity. Can form disulfide-bonded heterodimer with CD94. Interacts with CEACAM1; recruits PTPN6 that dephosphorylates VAV1.

Its subcellular location is the cell membrane. Functions as an activating and costimulatory receptor involved in immunosurveillance upon binding to various cellular stress-inducible ligands displayed at the surface of autologous tumor cells and virus-infected cells. Provides both stimulatory and costimulatory innate immune responses on activated killer (NK) cells, leading to cytotoxic activity. Acts as a costimulatory receptor for T-cell receptor (TCR) in CD8(+) T-cell-mediated adaptive immune responses by amplifying T-cell activation. Stimulates perforin-mediated elimination of ligand-expressing tumor cells. Signaling involves calcium influx, culminating in the expression of TNF-alpha. Participates in NK cell-mediated bone marrow graft rejection. May play a regulatory role in differentiation and survival of NK cells. Binds to ligands belonging to various subfamilies of MHC class I-related glycoproteins. The sequence is that of NKG2-D type II integral membrane protein (KLRK1) from Pongo pygmaeus (Bornean orangutan).